A 326-amino-acid chain; its full sequence is tRNA(Ile)-lysidine synthase (326 aa).

23-28 serves as a coordination point for ATP; sequence SGGVDS.

It belongs to the tRNA(Ile)-lysidine synthase family.

The protein localises to the cytoplasm. The catalysed reaction is cytidine(34) in tRNA(Ile2) + L-lysine + ATP = lysidine(34) in tRNA(Ile2) + AMP + diphosphate + H(+). Its function is as follows. Ligates lysine onto the cytidine present at position 34 of the AUA codon-specific tRNA(Ile) that contains the anticodon CAU, in an ATP-dependent manner. Cytidine is converted to lysidine, thus changing the amino acid specificity of the tRNA from methionine to isoleucine. This chain is tRNA(Ile)-lysidine synthase, found in Wolinella succinogenes (strain ATCC 29543 / DSM 1740 / CCUG 13145 / JCM 31913 / LMG 7466 / NCTC 11488 / FDC 602W) (Vibrio succinogenes).